Consider the following 121-residue polypeptide: Small ribosomal subunit protein uS13 (121 aa).

The interval 92 to 121 (RKGLPVRGQSSKTNARTVKGPRKTVANKKK) is disordered. The span at 110-121 (KGPRKTVANKKK) shows a compositional bias: basic residues.

This sequence belongs to the universal ribosomal protein uS13 family. Part of the 30S ribosomal subunit. Forms a loose heterodimer with protein S19. Forms two bridges to the 50S subunit in the 70S ribosome.

In terms of biological role, located at the top of the head of the 30S subunit, it contacts several helices of the 16S rRNA. In the 70S ribosome it contacts the 23S rRNA (bridge B1a) and protein L5 of the 50S subunit (bridge B1b), connecting the 2 subunits; these bridges are implicated in subunit movement. Contacts the tRNAs in the A and P-sites. This Mycoplasma capricolum subsp. capricolum (strain California kid / ATCC 27343 / NCTC 10154) protein is Small ribosomal subunit protein uS13.